The following is a 100-amino-acid chain: MEQALENQGPAREPFNEWTLELLEELKEEAVRHFPRPWLQACGQYIYETYGDTWEGVMAIIRILQQLLFTHYRIGCQHSRIGILPSNTRGRGRRNGSSRS.

Residues 1 to 42 form a homooligomerization region; it reads MEQALENQGPAREPFNEWTLELLEELKEEAVRHFPRPWLQAC. Residues Ser-79, Ser-98, and Ser-100 each carry the phosphoserine; by host modification.

This sequence belongs to the HIV-1 VPR protein family. In terms of assembly, homooligomer, may form homodimer. Interacts with p6-gag region of the Pr55 Gag precursor protein through a (Leu-X-X)4 motif near the C-terminus of the P6gag protein. Interacts with host UNG. May interact with host RAD23A/HHR23A. Interacts with host VPRBP/DCAF1, leading to hijack the CUL4A-RBX1-DDB1-DCAF1/VPRBP complex, mediating ubiquitination of host proteins such as TERT and ZGPAT and arrest of the cell cycle in G2 phase. In terms of processing, phosphorylated on several residues by host. These phosphorylations regulate VPR activity for the nuclear import of the HIV-1 pre-integration complex.

It is found in the virion. The protein resides in the host nucleus. Its subcellular location is the host extracellular space. In terms of biological role, during virus replication, may deplete host UNG protein, and incude G2-M cell cycle arrest. Acts by targeting specific host proteins for degradation by the 26S proteasome, through association with the cellular CUL4A-DDB1 E3 ligase complex by direct interaction with host VPRPB/DCAF-1. Cell cycle arrest reportedly occurs within hours of infection and is not blocked by antiviral agents, suggesting that it is initiated by the VPR carried into the virion. Additionally, VPR induces apoptosis in a cell cycle dependent manner suggesting that these two effects are mechanistically linked. Detected in the serum and cerebrospinal fluid of AIDS patient, VPR may also induce cell death to bystander cells. Its function is as follows. During virus entry, plays a role in the transport of the viral pre-integration (PIC) complex to the host nucleus. This function is crucial for viral infection of non-dividing macrophages. May act directly at the nuclear pore complex, by binding nucleoporins phenylalanine-glycine (FG)-repeat regions. In Human immunodeficiency virus type 1 group O (isolate MVP5180) (HIV-1), this protein is Protein Vpr.